We begin with the raw amino-acid sequence, 804 residues long: Phenylalanine--tRNA ligase beta subunit (804 aa).

One can recognise a tRNA-binding domain in the interval 38–148 (RAAFRAFTIA…ENAPVGTSFA (111 aa)). Residues 401-476 (HTARVIDFPV…RIHGINRIDP (76 aa)) form the B5 domain. Mg(2+)-binding residues include Asp-454, Asp-460, Glu-463, and Glu-464. Residues 710 to 803 (SLFQSLKRDY…VAKQTGGVLR (94 aa)) form the FDX-ACB domain.

This sequence belongs to the phenylalanyl-tRNA synthetase beta subunit family. Type 1 subfamily. In terms of assembly, tetramer of two alpha and two beta subunits. Requires Mg(2+) as cofactor.

The protein localises to the cytoplasm. It catalyses the reaction tRNA(Phe) + L-phenylalanine + ATP = L-phenylalanyl-tRNA(Phe) + AMP + diphosphate + H(+). The chain is Phenylalanine--tRNA ligase beta subunit from Brucella melitensis biotype 1 (strain ATCC 23456 / CCUG 17765 / NCTC 10094 / 16M).